A 291-amino-acid chain; its full sequence is Light-independent protochlorophyllide reductase iron-sulfur ATP-binding protein (291 aa).

ATP-binding positions include 10 to 15 (GIGKST) and Lys39. Ser14 is a binding site for Mg(2+). [4Fe-4S] cluster-binding residues include Cys95 and Cys129. An ATP-binding site is contributed by 180-181 (NR).

The protein belongs to the NifH/BchL/ChlL family. As to quaternary structure, homodimer. Protochlorophyllide reductase is composed of three subunits; ChlL, ChlN and ChlB. Requires [4Fe-4S] cluster as cofactor.

The protein localises to the plastid. Its subcellular location is the chloroplast. The catalysed reaction is chlorophyllide a + oxidized 2[4Fe-4S]-[ferredoxin] + 2 ADP + 2 phosphate = protochlorophyllide a + reduced 2[4Fe-4S]-[ferredoxin] + 2 ATP + 2 H2O. It functions in the pathway porphyrin-containing compound metabolism; chlorophyll biosynthesis (light-independent). In terms of biological role, component of the dark-operative protochlorophyllide reductase (DPOR) that uses Mg-ATP and reduced ferredoxin to reduce ring D of protochlorophyllide (Pchlide) to form chlorophyllide a (Chlide). This reaction is light-independent. The L component serves as a unique electron donor to the NB-component of the complex, and binds Mg-ATP. This chain is Light-independent protochlorophyllide reductase iron-sulfur ATP-binding protein, found in Picea abies (Norway spruce).